The primary structure comprises 121 residues: Large ribosomal subunit protein bL12 (121 aa).

This sequence belongs to the bacterial ribosomal protein bL12 family. Homodimer. Part of the ribosomal stalk of the 50S ribosomal subunit. Forms a multimeric L10(L12)X complex, where L10 forms an elongated spine to which 2 to 4 L12 dimers bind in a sequential fashion. Binds GTP-bound translation factors.

Its function is as follows. Forms part of the ribosomal stalk which helps the ribosome interact with GTP-bound translation factors. Is thus essential for accurate translation. This is Large ribosomal subunit protein bL12 from Pseudomonas fluorescens (strain ATCC BAA-477 / NRRL B-23932 / Pf-5).